Consider the following 186-residue polypeptide: Ion-translocating oxidoreductase complex subunit B (186 aa).

Residues 1-23 are hydrophobic; sequence MLTPILALTALALIAGALLGFAA. A 4Fe-4S domain is found at 29–88; sequence EGNPIADQVDAVLPQTQCGQCGFGGCRPYAEAIAAGEAEINRCPPGGQDTVQTLADLLGV. [4Fe-4S] cluster is bound by residues cysteine 46, cysteine 49, cysteine 54, cysteine 71, cysteine 114, cysteine 117, cysteine 120, cysteine 124, cysteine 144, cysteine 147, cysteine 150, and cysteine 154. 4Fe-4S ferredoxin-type domains lie at 105-134 and 135-164; these read QVAWVDEAVCIGCTRCIQACPVDAILGAAK and QMHTVLKGECTGCGLCVDPCPVDCIHMVPV.

Belongs to the 4Fe4S bacterial-type ferredoxin family. RnfB subfamily. As to quaternary structure, the complex is composed of six subunits: RnfA, RnfB, RnfC, RnfD, RnfE and RnfG. [4Fe-4S] cluster is required as a cofactor.

It localises to the cell inner membrane. In terms of biological role, part of a membrane-bound complex that couples electron transfer with translocation of ions across the membrane. The protein is Ion-translocating oxidoreductase complex subunit B of Alkalilimnicola ehrlichii (strain ATCC BAA-1101 / DSM 17681 / MLHE-1).